A 117-amino-acid polypeptide reads, in one-letter code: Putative membrane protein insertion efficiency factor (117 aa).

The protein belongs to the UPF0161 family.

Its subcellular location is the cell inner membrane. Functionally, could be involved in insertion of integral membrane proteins into the membrane. The chain is Putative membrane protein insertion efficiency factor from Bartonella henselae (strain ATCC 49882 / DSM 28221 / CCUG 30454 / Houston 1) (Rochalimaea henselae).